The chain runs to 100 residues: MARKSLIQRNKKRQKLELKYHWIRGSSKKEIHRVPLLSDKWEIYVKLQSSPRNSAPTRLHRRCFLTGRPRANYRDFGLSGHILREMVQACLLPGATRSSW.

Belongs to the universal ribosomal protein uS14 family. As to quaternary structure, part of the 30S ribosomal subunit.

The protein localises to the plastid. In terms of biological role, binds 16S rRNA, required for the assembly of 30S particles. In Cuscuta exaltata (Tall dodder), this protein is Small ribosomal subunit protein uS14c.